A 304-amino-acid chain; its full sequence is NADH-cytochrome b5 reductase 2 (304 aa).

Residues 9–29 (MLVALAVIGVTVLLFLIKALG) traverse the membrane as a helical segment. The 113-residue stretch at 43–155 (NAKYPLPLIE…RGPNGLLVYK (113 aa)) folds into the FAD-binding FR-type domain. FAD-binding positions include 135–150 (DSLKIGETIDFRGPNG) and 174–209 (VAKHVGMLAGGTGITPMLQLIRQITQDPNDNTKCSL).

Belongs to the flavoprotein pyridine nucleotide cytochrome reductase family. The cofactor is FAD.

It is found in the membrane. The catalysed reaction is 2 Fe(III)-[cytochrome b5] + NADH = 2 Fe(II)-[cytochrome b5] + NAD(+) + H(+). Functionally, NADH-cytochrome b5 reductases are involved in desaturation and elongation of fatty acids, cholesterol biosynthesis and drug metabolism. The protein is NADH-cytochrome b5 reductase 2 (cyb5r2) of Xenopus tropicalis (Western clawed frog).